A 105-amino-acid polypeptide reads, in one-letter code: Small cysteine and glycine repeat-containing protein 4 (105 aa).

A 14 X 2 AA repeats of CG region spans residues C4–G87.

Belongs to the KRTAP type 28 family.

In the hair cortex, hair keratin intermediate filaments are embedded in an interfilamentous matrix, consisting of hair keratin-associated proteins (KRTAP), which are essential for the formation of a rigid and resistant hair shaft through their extensive disulfide bond cross-linking with abundant cysteine residues of hair keratins. The matrix proteins include the high-sulfur and high-glycine-tyrosine keratins. The sequence is that of Small cysteine and glycine repeat-containing protein 4 from Homo sapiens (Human).